The following is a 268-amino-acid chain: Ribosomal RNA small subunit methyltransferase A (268 aa).

Residues N21, L23, G48, E69, D94, and N115 each coordinate S-adenosyl-L-methionine.

This sequence belongs to the class I-like SAM-binding methyltransferase superfamily. rRNA adenine N(6)-methyltransferase family. RsmA subfamily.

The protein localises to the cytoplasm. The catalysed reaction is adenosine(1518)/adenosine(1519) in 16S rRNA + 4 S-adenosyl-L-methionine = N(6)-dimethyladenosine(1518)/N(6)-dimethyladenosine(1519) in 16S rRNA + 4 S-adenosyl-L-homocysteine + 4 H(+). In terms of biological role, specifically dimethylates two adjacent adenosines (A1518 and A1519) in the loop of a conserved hairpin near the 3'-end of 16S rRNA in the 30S particle. May play a critical role in biogenesis of 30S subunits. In Saccharophagus degradans (strain 2-40 / ATCC 43961 / DSM 17024), this protein is Ribosomal RNA small subunit methyltransferase A.